The chain runs to 232 residues: Proteasome subunit alpha type-2 (232 aa).

It belongs to the peptidase T1A family. As to quaternary structure, the 26S proteasome consists of a 20S proteasome core and two 19S regulatory subunits. The 20S proteasome core is composed of 28 subunits that are arranged in four stacked rings, resulting in a barrel-shaped structure. The two end rings are each formed by seven alpha subunits, and the two central rings are each formed by seven beta subunits. The catalytic chamber with the active sites is on the inside of the barrel.

It is found in the cytoplasm. The protein localises to the nucleus. Functionally, the proteasome is a multicatalytic proteinase complex which is characterized by its ability to cleave peptides with Arg, Phe, Tyr, Leu, and Glu adjacent to the leaving group at neutral or slightly basic pH. The proteasome has an ATP-dependent proteolytic activity. The protein is Proteasome subunit alpha type-2 (psmA2) of Dictyostelium discoideum (Social amoeba).